The primary structure comprises 487 residues: Malonate-semialdehyde dehydrogenase 2 (487 aa).

The NAD(+) site is built by phenylalanine 154, lysine 178, glutamate 181, arginine 182, and serine 231. The active-site Nucleophile is the cysteine 286. Glutamate 386 contributes to the NAD(+) binding site.

It belongs to the aldehyde dehydrogenase family. IolA subfamily. As to quaternary structure, homotetramer.

It carries out the reaction 3-oxopropanoate + NAD(+) + CoA + H2O = hydrogencarbonate + acetyl-CoA + NADH + H(+). It catalyses the reaction 2-methyl-3-oxopropanoate + NAD(+) + CoA + H2O = propanoyl-CoA + hydrogencarbonate + NADH + H(+). It participates in polyol metabolism; myo-inositol degradation into acetyl-CoA; acetyl-CoA from myo-inositol: step 7/7. Its function is as follows. Catalyzes the oxidation of malonate semialdehyde (MSA) and methylmalonate semialdehyde (MMSA) into acetyl-CoA and propanoyl-CoA, respectively. Is involved in a myo-inositol catabolic pathway. Bicarbonate, and not CO2, is the end-product of the enzymatic reaction. In Bacillus anthracis, this protein is Malonate-semialdehyde dehydrogenase 2.